A 183-amino-acid chain; its full sequence is UPF0114 protein HI_0507 (183 aa).

The next 3 membrane-spanning stretches (helical) occupy residues 30-50 (LQVP…YKFI), 68-88 (IMLG…LVMV), and 150-170 (TMMW…ALAY).

This sequence belongs to the UPF0114 family.

It is found in the cell membrane. This chain is UPF0114 protein HI_0507, found in Haemophilus influenzae (strain ATCC 51907 / DSM 11121 / KW20 / Rd).